The sequence spans 115 residues: Type 3 secretion system chaperone YscG (115 aa).

This sequence belongs to the YscG family. As to quaternary structure, component of the heterodimeric YscE-YscG chaperone. The YscE-YscG chaperone forms a stable ternary complex with YscF/SctF.

The protein localises to the cytoplasm. Functionally, chaperone of the type III secretion system (T3SS), also called injectisome, which is used to inject bacterial effector proteins into eukaryotic host cells. Along with YscE, prevents premature polymerization of the YscF/SctF needle protein within the cytoplasm. Required for Yop secretion. The chain is Type 3 secretion system chaperone YscG from Yersinia enterocolitica.